A 544-amino-acid chain; its full sequence is Chaperonin GroEL (544 aa).

Residues 30–33 (TLGP), K51, 87–91 (DGTTT), G415, 478–480 (DVA), and D494 contribute to the ATP site. The tract at residues 524–544 (PEKEKKPATPAGAGGMGDMEY) is disordered. The span at 535 to 544 (GAGGMGDMEY) shows a compositional bias: gly residues.

It belongs to the chaperonin (HSP60) family. As to quaternary structure, forms a cylinder of 14 subunits composed of two heptameric rings stacked back-to-back. Interacts with the co-chaperonin GroES.

Its subcellular location is the cytoplasm. It catalyses the reaction ATP + H2O + a folded polypeptide = ADP + phosphate + an unfolded polypeptide.. Its function is as follows. Together with its co-chaperonin GroES, plays an essential role in assisting protein folding. The GroEL-GroES system forms a nano-cage that allows encapsulation of the non-native substrate proteins and provides a physical environment optimized to promote and accelerate protein folding. This chain is Chaperonin GroEL, found in Methylacidiphilum infernorum (isolate V4) (Methylokorus infernorum (strain V4)).